The chain runs to 491 residues: Cyclin-B1-5 (491 aa).

The Cyclin N-terminal domain maps to Asp275–Gln347.

The protein belongs to the cyclin family. Cyclin AB subfamily. In terms of tissue distribution, expressed in roots, stems and flowers.

The polypeptide is Cyclin-B1-5 (CYCB1-5) (Arabidopsis thaliana (Mouse-ear cress)).